The primary structure comprises 422 residues: Glutamate 2,3-aminomutase (422 aa).

The Radical SAM core domain maps to 150–371 (RRYPDRLIIN…AIPTYIVNAP (222 aa)). [4Fe-4S] cluster-binding residues include Cys164, Cys168, and Cys171. Lys376 bears the N6-(pyridoxal phosphate)lysine mark.

It belongs to the radical SAM superfamily. It depends on pyridoxal 5'-phosphate as a cofactor. The cofactor is [4Fe-4S] cluster.

The catalysed reaction is L-glutamate = 3-aminopentanedioate. Functionally, catalyzes the interconversion of L-glutamate and L-beta-glutamate. Does not have L-lysine 2,3-aminomutase activity. The chain is Glutamate 2,3-aminomutase (eam) from Clostridioides difficile (strain 630) (Peptoclostridium difficile).